We begin with the raw amino-acid sequence, 254 residues long: Urease accessory protein UreF (254 aa).

Over residues 1 to 11 (MDKGKSVKSTE) the composition is skewed to basic and acidic residues. A disordered region spans residues 1–26 (MDKGKSVKSTEKSVGMPPKTPKTDNN).

It belongs to the UreF family. UreH, UreF and UreG form a complex that acts as a GTP-hydrolysis-dependent molecular chaperone, activating the urease apoprotein by helping to assemble the nickel containing metallocenter of UreC. The UreE protein probably delivers the nickel.

The protein resides in the cytoplasm. Its function is as follows. Required for maturation of urease via the functional incorporation of the urease nickel metallocenter. The chain is Urease accessory protein UreF from Helicobacter pylori (strain ATCC 700392 / 26695) (Campylobacter pylori).